The chain runs to 87 residues: Small ribosomal subunit protein uS17 (87 aa).

The protein belongs to the universal ribosomal protein uS17 family. As to quaternary structure, part of the 30S ribosomal subunit.

Functionally, one of the primary rRNA binding proteins, it binds specifically to the 5'-end of 16S ribosomal RNA. This is Small ribosomal subunit protein uS17 from Heliobacterium modesticaldum (strain ATCC 51547 / Ice1).